The following is a 549-amino-acid chain: Chaperonin GroEL (549 aa).

ATP-binding positions include 29 to 32, Lys50, 86 to 90, Gly414, 477 to 479, and Asp493; these read TLGP, DGTTT, and NAL.

Belongs to the chaperonin (HSP60) family. As to quaternary structure, forms a cylinder of 14 subunits composed of two heptameric rings stacked back-to-back. Interacts with the co-chaperonin GroES.

Its subcellular location is the cytoplasm. The catalysed reaction is ATP + H2O + a folded polypeptide = ADP + phosphate + an unfolded polypeptide.. Its function is as follows. Together with its co-chaperonin GroES, plays an essential role in assisting protein folding. The GroEL-GroES system forms a nano-cage that allows encapsulation of the non-native substrate proteins and provides a physical environment optimized to promote and accelerate protein folding. This is Chaperonin GroEL from Leptospira biflexa serovar Patoc (strain Patoc 1 / Ames).